A 506-amino-acid chain; its full sequence is Glutamate--tRNA ligase (506 aa).

The 'HIGH' region signature appears at 21-31 (PSPTGTPHVGM). Positions 265–269 (KLSKR) match the 'KMSKS' region motif. Lys268 is an ATP binding site.

Belongs to the class-I aminoacyl-tRNA synthetase family. Glutamate--tRNA ligase type 1 subfamily. As to quaternary structure, monomer.

It is found in the cytoplasm. The enzyme catalyses tRNA(Glu) + L-glutamate + ATP = L-glutamyl-tRNA(Glu) + AMP + diphosphate. Catalyzes the attachment of glutamate to tRNA(Glu) in a two-step reaction: glutamate is first activated by ATP to form Glu-AMP and then transferred to the acceptor end of tRNA(Glu). The protein is Glutamate--tRNA ligase of Bifidobacterium longum (strain DJO10A).